A 159-amino-acid chain; its full sequence is Small ribosomal subunit protein uS7 (159 aa).

It belongs to the universal ribosomal protein uS7 family. In terms of assembly, part of the 30S ribosomal subunit. Contacts proteins S9 and S11.

In terms of biological role, one of the primary rRNA binding proteins, it binds directly to 16S rRNA where it nucleates assembly of the head domain of the 30S subunit. Is located at the subunit interface close to the decoding center, probably blocks exit of the E-site tRNA. This Rickettsia felis (strain ATCC VR-1525 / URRWXCal2) (Rickettsia azadi) protein is Small ribosomal subunit protein uS7.